We begin with the raw amino-acid sequence, 618 residues long: Proline--tRNA ligase (618 aa).

It belongs to the class-II aminoacyl-tRNA synthetase family. ProS type 1 subfamily. Homodimer.

Its subcellular location is the cytoplasm. It catalyses the reaction tRNA(Pro) + L-proline + ATP = L-prolyl-tRNA(Pro) + AMP + diphosphate. In terms of biological role, catalyzes the attachment of proline to tRNA(Pro) in a two-step reaction: proline is first activated by ATP to form Pro-AMP and then transferred to the acceptor end of tRNA(Pro). As ProRS can inadvertently accommodate and process non-cognate amino acids such as alanine and cysteine, to avoid such errors it has two additional distinct editing activities against alanine. One activity is designated as 'pretransfer' editing and involves the tRNA(Pro)-independent hydrolysis of activated Ala-AMP. The other activity is designated 'posttransfer' editing and involves deacylation of mischarged Ala-tRNA(Pro). The misacylated Cys-tRNA(Pro) is not edited by ProRS. This is Proline--tRNA ligase from Streptococcus pyogenes serotype M4 (strain MGAS10750).